The chain runs to 562 residues: Adenylate kinase isoenzyme 5 (562 aa).

Adenylate kinase regions lie at residues 133-316 (KIIL…MAVD) and 377-559 (KIIF…TAID). 142-147 (GSGKGT) provides a ligand contact to ATP. An NMP 1 region spans residues 162–193 (SVGELLRKKIHSTSSNRKWSLIAKIITTGELA). AMP contacts are provided by residues R168, 191–193 (ELA), 219–222 (GFPR), and Q226. The LID 1 stretch occupies residues 256-266 (KRAEQQGRPDD). R257 contacts ATP. AMP is bound by residues R263 and R274. Position 386–391 (386–391 (GSGKGT)) interacts with ATP. Residues 406–435 (STDELLQNELSSESGRSKLIRDIMERGELV) are NMP 2. AMP contacts are provided by residues T407, 433–435 (ELV), 462–465 (GYPR), and Q469. The interval 499–509 (QRSRNSPQADD) is LID 2. R500 provides a ligand contact to ATP. R517 is an AMP binding site. G545 is a binding site for ATP.

The protein belongs to the adenylate kinase family. In terms of assembly, monomer.

The protein localises to the cytoplasm. It carries out the reaction AMP + ATP = 2 ADP. It catalyses the reaction a 2'-deoxyribonucleoside 5'-diphosphate + ATP = a 2'-deoxyribonucleoside 5'-triphosphate + ADP. The catalysed reaction is a ribonucleoside 5'-diphosphate + ATP = a ribonucleoside 5'-triphosphate + ADP. Functionally, nucleoside monophosphate (NMP) kinase that catalyzes the reversible transfer of the terminal phosphate group between nucleoside triphosphates and monophosphates. Active on AMP and dAMP with ATP as a donor. When GTP is used as phosphate donor, the enzyme phosphorylates AMP, CMP, and to a small extent dCMP. Also displays broad nucleoside diphosphate kinase activity. The polypeptide is Adenylate kinase isoenzyme 5 (Ak5) (Bos taurus (Bovine)).